Consider the following 191-residue polypeptide: Molybdenum cofactor guanylyltransferase (191 aa).

GTP-binding positions include 13 to 15 (LAG), K26, D72, and D102. Residue D102 coordinates Mg(2+).

Belongs to the MobA family. In terms of assembly, monomer. It depends on Mg(2+) as a cofactor.

Its subcellular location is the cytoplasm. The enzyme catalyses Mo-molybdopterin + GTP + H(+) = Mo-molybdopterin guanine dinucleotide + diphosphate. Functionally, transfers a GMP moiety from GTP to Mo-molybdopterin (Mo-MPT) cofactor (Moco or molybdenum cofactor) to form Mo-molybdopterin guanine dinucleotide (Mo-MGD) cofactor. The sequence is that of Molybdenum cofactor guanylyltransferase from Pseudomonas putida (Arthrobacter siderocapsulatus).